An 84-amino-acid polypeptide reads, in one-letter code: Large ribosomal subunit protein bL27 (84 aa).

Residues 1-25 (MAHKKAGGSSKNGRDSAGKRLGVKR) are disordered.

The protein belongs to the bacterial ribosomal protein bL27 family.

This chain is Large ribosomal subunit protein bL27, found in Syntrophotalea carbinolica (strain DSM 2380 / NBRC 103641 / GraBd1) (Pelobacter carbinolicus).